Reading from the N-terminus, the 112-residue chain is FK506-binding protein 1A (112 aa).

One can recognise a PPIase FKBP-type domain in the interval 20–108 (GDFVTIHYTG…IFEVELLGIN (89 aa)).

This sequence belongs to the FKBP-type PPIase family. FKBP1 subfamily.

It is found in the cytoplasm. It carries out the reaction [protein]-peptidylproline (omega=180) = [protein]-peptidylproline (omega=0). Inhibited by both FK506 and rapamycin. Functionally, PPIases accelerate the folding of proteins. It catalyzes the cis-trans isomerization of proline imidic peptide bonds in oligopeptides. The polypeptide is FK506-binding protein 1A (fpr1A) (Aspergillus fumigatus (strain ATCC MYA-4609 / CBS 101355 / FGSC A1100 / Af293) (Neosartorya fumigata)).